The primary structure comprises 438 residues: Phosphatidylserine decarboxylase proenzyme 1, mitochondrial (438 aa).

The transit peptide at Met1–Pro21 directs the protein to the mitochondrion. Residues Cys22–Pro48 lie on the Mitochondrial matrix side of the membrane. Residues Gly49–Tyr67 traverse the membrane as a helical segment. Residues Glu68–Glu438 are Mitochondrial intermembrane-facing. Active-site charge relay system; for autoendoproteolytic cleavage activity residues include Asp173, His273, and Ser387. The active-site Schiff-base intermediate with substrate; via pyruvic acid; for decarboxylase activity is Ser387. Residue Ser387 is modified to Pyruvic acid (Ser); by autocatalysis.

Belongs to the phosphatidylserine decarboxylase family. PSD-B subfamily. Eukaryotic type I sub-subfamily. In terms of assembly, heterodimer of a large membrane-associated beta subunit and a small pyruvoyl-containing alpha subunit. It depends on pyruvate as a cofactor. Post-translationally, is synthesized initially as an inactive proenzyme. Formation of the active enzyme involves a self-maturation process in which the active site pyruvoyl group is generated from an internal serine residue via an autocatalytic post-translational modification. Two non-identical subunits are generated from the proenzyme in this reaction, and the pyruvate is formed at the N-terminus of the alpha chain, which is derived from the carboxyl end of the proenzyme. The autoendoproteolytic cleavage occurs by a canonical serine protease mechanism, in which the side chain hydroxyl group of the serine supplies its oxygen atom to form the C-terminus of the beta chain, while the remainder of the serine residue undergoes an oxidative deamination to produce ammonia and the pyruvoyl prosthetic group on the alpha chain. During this reaction, the Ser that is part of the protease active site of the proenzyme becomes the pyruvoyl prosthetic group, which constitutes an essential element of the active site of the mature decarboxylase.

The protein localises to the mitochondrion inner membrane. It catalyses the reaction a 1,2-diacyl-sn-glycero-3-phospho-L-serine + H(+) = a 1,2-diacyl-sn-glycero-3-phosphoethanolamine + CO2. It participates in phospholipid metabolism; phosphatidylethanolamine biosynthesis; phosphatidylethanolamine from CDP-diacylglycerol: step 2/2. Catalyzes the formation of phosphatidylethanolamine (PtdEtn) from phosphatidylserine (PtdSer). Plays a central role in phospholipid metabolism and in the interorganelle trafficking of phosphatidylserine. This chain is Phosphatidylserine decarboxylase proenzyme 1, mitochondrial (PSD1), found in Oryza sativa subsp. japonica (Rice).